Here is a 727-residue protein sequence, read N- to C-terminus: Elongation factor 2 (727 aa).

A tr-type G domain is found at 19 to 260 (DQIRNMGICA…MAIKHLPNPL (242 aa)). Residues 28-35 (AHIDHGKT), 94-98 (DTPGH), and 148-151 (NKVD) each bind GTP. His603 is modified (diphthamide).

It belongs to the TRAFAC class translation factor GTPase superfamily. Classic translation factor GTPase family. EF-G/EF-2 subfamily.

The protein localises to the cytoplasm. Catalyzes the GTP-dependent ribosomal translocation step during translation elongation. During this step, the ribosome changes from the pre-translocational (PRE) to the post-translocational (POST) state as the newly formed A-site-bound peptidyl-tRNA and P-site-bound deacylated tRNA move to the P and E sites, respectively. Catalyzes the coordinated movement of the two tRNA molecules, the mRNA and conformational changes in the ribosome. This Methanococcus vannielii (strain ATCC 35089 / DSM 1224 / JCM 13029 / OCM 148 / SB) protein is Elongation factor 2 (fusA).